The primary structure comprises 332 residues: Anthranilate phosphoribosyltransferase (332 aa).

Residues G78, 81–82 (GD), S86, 88–91 (NIST), 106–114 (KHGNKSITS), and S118 each bind 5-phospho-alpha-D-ribose 1-diphosphate. Residue G78 coordinates anthranilate. S90 serves as a coordination point for Mg(2+). N109 contributes to the anthranilate binding site. R163 is an anthranilate binding site. The Mg(2+) site is built by D222 and E223.

This sequence belongs to the anthranilate phosphoribosyltransferase family. As to quaternary structure, homodimer. Mg(2+) is required as a cofactor.

The catalysed reaction is N-(5-phospho-beta-D-ribosyl)anthranilate + diphosphate = 5-phospho-alpha-D-ribose 1-diphosphate + anthranilate. It participates in amino-acid biosynthesis; L-tryptophan biosynthesis; L-tryptophan from chorismate: step 2/5. In terms of biological role, catalyzes the transfer of the phosphoribosyl group of 5-phosphorylribose-1-pyrophosphate (PRPP) to anthranilate to yield N-(5'-phosphoribosyl)-anthranilate (PRA). This is Anthranilate phosphoribosyltransferase from Staphylococcus aureus (strain Mu3 / ATCC 700698).